A 280-amino-acid polypeptide reads, in one-letter code: Large ribosomal subunit protein uL2 (280 aa).

The interval 215 to 280 (GRRPHVRGSA…IQRANDKKEK (66 aa)) is disordered.

It belongs to the universal ribosomal protein uL2 family. In terms of assembly, part of the 50S ribosomal subunit. Forms a bridge to the 30S subunit in the 70S ribosome.

In terms of biological role, one of the primary rRNA binding proteins. Required for association of the 30S and 50S subunits to form the 70S ribosome, for tRNA binding and peptide bond formation. It has been suggested to have peptidyltransferase activity; this is somewhat controversial. Makes several contacts with the 16S rRNA in the 70S ribosome. The chain is Large ribosomal subunit protein uL2 from Dictyoglomus thermophilum (strain ATCC 35947 / DSM 3960 / H-6-12).